Reading from the N-terminus, the 599-residue chain is Thiamine transporter THI72 (599 aa).

Transmembrane regions (helical) follow at residues 42–62 (WGFWSNFAYWGVLSFNVGMWI), 78–98 (IGAFIIADLLTILFALANSCP), 112–132 (FVFGIYGSALGIIIRILMSIV), 174–194 (LIGFIIFHILTAFCYFMKPYH), 197–217 (YILIWSCVGTFFAMLGMVIYL), 280–300 (IVALLIPATLIPVFGIIGASA), 333–353 (FFCGFCFVMSQISYTISNCGF), 372–392 (GAIFAACVSWACLPWNFYNSS), 395–415 (FLTVMSSFGVVMTPIITVMIC), 447–467 (AIVAWVCGMAPGLPGIAWEVN), and 484–504 (SFFSFLISFFVYWGLCLLFPF). The disordered stretch occupies residues 553-599 (HEYKPESSDDELPELTKTSSENTKVFEIVHQKDNEKESSTSSEKQIA). Ser-560 and Ser-572 each carry phosphoserine. The segment covering 579-590 (EIVHQKDNEKES) has biased composition (basic and acidic residues).

Belongs to the purine-cytosine permease (2.A.39) family.

The protein resides in the membrane. Low affinity thiamine transporter responsible for intake of thiamine. It is possible that the primary function is the uptake of closely related compounds and that thiamine transport is a secondary activity of these proteins. This chain is Thiamine transporter THI72 (THI72), found in Saccharomyces cerevisiae (strain ATCC 204508 / S288c) (Baker's yeast).